A 471-amino-acid chain; its full sequence is Heat shock 70 kDa protein 13 (471 aa).

The signal sequence occupies residues 1–22 (MAGEMTILGSAVLTLLLAGYLA). The interval 315 to 337 (ENDRKGPPTSDSELPKDKFSQAN) is disordered.

The protein belongs to the heat shock protein 70 family. In terms of assembly, binds UBQLN2.

It localises to the microsome. The protein resides in the endoplasmic reticulum. Its function is as follows. Has peptide-independent ATPase activity. In Bos taurus (Bovine), this protein is Heat shock 70 kDa protein 13 (HSPA13).